The primary structure comprises 154 residues: Lipoprotein signal peptidase (154 aa).

A run of 3 helical transmembrane segments spans residues Ile-4 to Ile-24, Leu-62 to Ile-82, and Gly-84 to Ile-104. Catalysis depends on residues Asp-114 and Asp-130. The chain crosses the membrane as a helical span at residues Ile-125 to Trp-145.

Belongs to the peptidase A8 family.

It localises to the cell membrane. The enzyme catalyses Release of signal peptides from bacterial membrane prolipoproteins. Hydrolyzes -Xaa-Yaa-Zaa-|-(S,diacylglyceryl)Cys-, in which Xaa is hydrophobic (preferably Leu), and Yaa (Ala or Ser) and Zaa (Gly or Ala) have small, neutral side chains.. Its pathway is protein modification; lipoprotein biosynthesis (signal peptide cleavage). This protein specifically catalyzes the removal of signal peptides from prolipoproteins. The sequence is that of Lipoprotein signal peptidase from Streptococcus agalactiae serotype V (strain ATCC BAA-611 / 2603 V/R).